The primary structure comprises 564 residues: 60 kDa lysophospholipase (564 aa).

The Asparaginase/glutaminase domain maps to 9–355 (RRLLAIYTGG…NDRKKLLAKD (347 aa)). Thr19 functions as the Acyl-ester intermediate in the catalytic mechanism. An asparaginase region spans residues 41–350 (TLHMFHDEEY…PGLSLNDRKK (310 aa)). Residues 84–86 (DSS) and 116–117 (TD) each bind substrate. ANK repeat units follow at residues 141 to 170 (GAQV…YVIP), 396 to 426 (VLLP…DLNL), 430 to 459 (SGQT…DVDA), 463 to 492 (DGQS…RLSP), and 530 to 559 (DGHC…SVCA). Residue Ser478 is modified to Phosphoserine.

The protein in the N-terminal section; belongs to the asparaginase 1 family. As to quaternary structure, monomer.

The enzyme catalyses a 1-acyl-sn-glycero-3-phosphocholine + H2O = sn-glycerol 3-phosphocholine + a fatty acid + H(+). It carries out the reaction L-asparagine + H2O = L-aspartate + NH4(+). The catalysed reaction is a 1-O-alkyl-2-acetyl-sn-glycero-3-phosphocholine + H2O = a 1-O-alkyl-sn-glycero-3-phosphocholine + acetate + H(+). It catalyses the reaction 1-hexadecanoyl-sn-glycero-3-phosphocholine + H2O = sn-glycerol 3-phosphocholine + hexadecanoate + H(+). The enzyme catalyses 2 1-hexadecanoyl-sn-glycero-3-phosphocholine = 1,2-dihexadecanoyl-sn-glycero-3-phosphocholine + sn-glycerol 3-phosphocholine. It carries out the reaction 1-octadecanoyl-sn-glycero-3-phosphocholine + H2O = octadecanoate + sn-glycerol 3-phosphocholine + H(+). The catalysed reaction is 1-(9Z-octadecenoyl)-sn-glycero-3-phosphocholine + H2O = sn-glycerol 3-phosphocholine + (9Z)-octadecenoate + H(+). It catalyses the reaction 1-hexadecanoyl-sn-glycero-3-phosphoethanolamine + H2O = sn-glycero-3-phosphoethanolamine + hexadecanoate + H(+). The enzyme catalyses 1-(9Z-octadecenoyl)-sn-glycero-3-phosphoethanolamine + H2O = sn-glycero-3-phosphoethanolamine + (9Z)-octadecenoate + H(+). It carries out the reaction 1-hexadecanoyl-sn-glycero-3-phosphoethanolamine + 1-hexadecanoyl-sn-glycero-3-phosphocholine = 1,2-dihexadecanoyl-sn-glycero-3-phosphoethanolamine + sn-glycerol 3-phosphocholine. The catalysed reaction is 2-(5Z,8Z,11Z,14Z)-eicosatetraenoyl-sn-glycero-3-phosphocholine + H2O = sn-glycerol 3-phosphocholine + (5Z,8Z,11Z,14Z)-eicosatetraenoate + H(+). It catalyses the reaction 2-hexadecanoyl-sn-glycero-3-phosphocholine + H2O = sn-glycerol 3-phosphocholine + hexadecanoate + H(+). The enzyme catalyses 2 2-hexadecanoyl-sn-glycero-3-phosphocholine = 1,2-dihexadecanoyl-sn-glycero-3-phosphocholine + sn-glycerol 3-phosphocholine. It carries out the reaction 1-O-(9Z)-octadecenoyl-2-O-acetyl-sn-glycero-3-phosphocholine + H2O = 2-acetyl-sn-glycero-3-phosphocholine + (9Z)-octadecenoate + H(+). The catalysed reaction is a 1-acyl-sn-glycero-3-phospho-(1D-myo-inositol) + 1-hexadecanoyl-sn-glycero-3-phosphocholine = a 1-acyl-2-hexadecanoyl-sn-glycero-3-phospho-(1D-myo-inositol) + sn-glycerol 3-phosphocholine. It catalyses the reaction 2 2-(5Z,8Z,11Z,14Z)-eicosatetraenoyl-sn-glycero-3-phosphocholine = 1,2-di-(5Z,8Z,11Z,14Z-eicosatetraenoyl)-sn-glycero-3-phosphocholine + sn-glycerol 3-phosphocholine. Exhibits lysophospholipase, transacylase, PAF acetylhydrolase and asparaginase activities. Can catalyze three types of transacylation reactions: (1) acyl transfer from 1-acyl-sn-glycero-3-phosphocholine (1-acyl-GPC) to the sn-1(3) positions of glycerol and 2-acylglycerol (sn-1 to -1(3) transfer), (2) acyl transfer from 1-acyl-GPC to the sn-2 positions of 1-acyl-GPC, 1-acyl-sn-glycero-3-phosphoethanolamine (1-acyl-GPE), and other lysophospholipids (sn-1 to -2 transfer) and (3) acyl transfer from 2-acyl-GPC to the sn-1 position of 2-acyl-GPC and 2-acyl-GPE (sn-2 to -1 transfer). Mediates the synthesis of 1-arachidonoyl species of phospholipids by transferring the arachidonoyl residue from 2-arachidonoyl lysophospholipid to the sn-1 position of 2-acyl lysophospholipid. This Mus musculus (Mouse) protein is 60 kDa lysophospholipase (Aspg).